The following is a 166-amino-acid chain: Cyclic pyranopterin monophosphate synthase (166 aa).

Substrate-binding positions include 83–85 (LCH) and 121–122 (ME). Asp-136 is a catalytic residue.

The protein belongs to the MoaC family. Homohexamer; trimer of dimers.

The enzyme catalyses (8S)-3',8-cyclo-7,8-dihydroguanosine 5'-triphosphate = cyclic pyranopterin phosphate + diphosphate. It functions in the pathway cofactor biosynthesis; molybdopterin biosynthesis. Catalyzes the conversion of (8S)-3',8-cyclo-7,8-dihydroguanosine 5'-triphosphate to cyclic pyranopterin monophosphate (cPMP). In Rhodospirillum rubrum (strain ATCC 11170 / ATH 1.1.1 / DSM 467 / LMG 4362 / NCIMB 8255 / S1), this protein is Cyclic pyranopterin monophosphate synthase.